The following is a 151-amino-acid chain: Succinate dehydrogenase subunit 4, mitochondrial (151 aa).

The transit peptide at 1-78 (MSLRRTILDL…RSISSSIGQS (78 aa)) directs the protein to the mitochondrion. His109 is a heme binding site. An a ubiquinone-binding site is contributed by Tyr121. The chain crosses the membrane as a helical span at residues 130 to 150 (LIVMSLGLFQIIVLKDIILFL).

As to quaternary structure, component of complex II composed of eight subunits in plants: four classical SDH subunits SDH1, SDH2, SDH3 and SDH4 (a flavoprotein (FP), an iron-sulfur protein (IP), and a cytochrome b composed of a large and a small subunit.), as well as four subunits unknown in mitochondria from bacteria and heterotrophic eukaryotes. Heme is required as a cofactor. Expressed in flowers, inflorescences and stems.

The protein resides in the mitochondrion inner membrane. It participates in carbohydrate metabolism; tricarboxylic acid cycle. Functionally, membrane-anchoring subunit of succinate dehydrogenase (SDH). The chain is Succinate dehydrogenase subunit 4, mitochondrial from Arabidopsis thaliana (Mouse-ear cress).